Here is a 154-residue protein sequence, read N- to C-terminus: Endoribonuclease YbeY (154 aa).

Zn(2+) contacts are provided by His120, His124, and His130.

Belongs to the endoribonuclease YbeY family. Requires Zn(2+) as cofactor.

The protein resides in the cytoplasm. Its function is as follows. Single strand-specific metallo-endoribonuclease involved in late-stage 70S ribosome quality control and in maturation of the 3' terminus of the 16S rRNA. The protein is Endoribonuclease YbeY of Oceanobacillus iheyensis (strain DSM 14371 / CIP 107618 / JCM 11309 / KCTC 3954 / HTE831).